The following is a 270-amino-acid chain: tRNA pseudouridine synthase A (270 aa).

The active-site Nucleophile is the Asp-55. Tyr-110 is a substrate binding site.

It belongs to the tRNA pseudouridine synthase TruA family.

It carries out the reaction uridine(38/39/40) in tRNA = pseudouridine(38/39/40) in tRNA. Its function is as follows. Formation of pseudouridine at positions 38, 39 and 40 in the anticodon stem and loop of transfer RNAs. The polypeptide is tRNA pseudouridine synthase A (Methanoculleus marisnigri (strain ATCC 35101 / DSM 1498 / JR1)).